The primary structure comprises 247 residues: Uridylate kinase (247 aa).

An ATP-binding site is contributed by 17 to 20 (KFSG). UMP is bound at residue G59. ATP is bound by residues G60 and R64. Residues D79 and 140–147 (TGNPFFTT) contribute to the UMP site. Positions 167, 173, and 176 each coordinate ATP.

This sequence belongs to the UMP kinase family. Homohexamer.

It localises to the cytoplasm. It carries out the reaction UMP + ATP = UDP + ADP. It functions in the pathway pyrimidine metabolism; CTP biosynthesis via de novo pathway; UDP from UMP (UMPK route): step 1/1. Inhibited by UTP. Its function is as follows. Catalyzes the reversible phosphorylation of UMP to UDP. The sequence is that of Uridylate kinase from Legionella pneumophila (strain Lens).